The chain runs to 87 residues: Retinal rod rhodopsin-sensitive cGMP 3',5'-cyclic phosphodiesterase subunit gamma (87 aa).

At M1 the chain carries N-acetylmethionine. Residues 1 to 12 show a composition bias toward basic and acidic residues; the sequence is MNLEPPKAEIRS. The segment at 1–55 is disordered; it reads MNLEPPKAEIRSATRVIGGPVTPRKGPPKFKQRQTRQFKSKPPKKGVQGFGDDIP. Residues 26-44 are compositionally biased toward basic residues; sequence GPPKFKQRQTRQFKSKPPK.

Belongs to the rod/cone cGMP-PDE gamma subunit family. As to quaternary structure, oligomer composed of two catalytic chains (alpha and beta), an inhibitory chain (gamma) and the delta chain.

The enzyme catalyses 3',5'-cyclic GMP + H2O = GMP + H(+). In terms of biological role, participates in processes of transmission and amplification of the visual signal. cGMP-PDEs are the effector molecules in G-protein-mediated phototransduction in vertebrate rods and cones. The sequence is that of Retinal rod rhodopsin-sensitive cGMP 3',5'-cyclic phosphodiesterase subunit gamma (PDE6G) from Canis lupus familiaris (Dog).